A 485-amino-acid polypeptide reads, in one-letter code: Glutamyl-tRNA(Gln) amidotransferase subunit A (485 aa).

Catalysis depends on charge relay system residues K79 and S154. S178 acts as the Acyl-ester intermediate in catalysis.

The protein belongs to the amidase family. GatA subfamily. Heterotrimer of A, B and C subunits.

It carries out the reaction L-glutamyl-tRNA(Gln) + L-glutamine + ATP + H2O = L-glutaminyl-tRNA(Gln) + L-glutamate + ADP + phosphate + H(+). Allows the formation of correctly charged Gln-tRNA(Gln) through the transamidation of misacylated Glu-tRNA(Gln) in organisms which lack glutaminyl-tRNA synthetase. The reaction takes place in the presence of glutamine and ATP through an activated gamma-phospho-Glu-tRNA(Gln). In Bacillus pumilus (strain SAFR-032), this protein is Glutamyl-tRNA(Gln) amidotransferase subunit A.